The following is a 316-amino-acid chain: Glycine--tRNA ligase alpha subunit (316 aa).

It belongs to the class-II aminoacyl-tRNA synthetase family. In terms of assembly, tetramer of two alpha and two beta subunits.

The protein localises to the cytoplasm. The enzyme catalyses tRNA(Gly) + glycine + ATP = glycyl-tRNA(Gly) + AMP + diphosphate. The polypeptide is Glycine--tRNA ligase alpha subunit (Cupriavidus taiwanensis (strain DSM 17343 / BCRC 17206 / CCUG 44338 / CIP 107171 / LMG 19424 / R1) (Ralstonia taiwanensis (strain LMG 19424))).